The sequence spans 122 residues: Small ribosomal subunit protein bS6 (122 aa).

Belongs to the bacterial ribosomal protein bS6 family.

In terms of biological role, binds together with bS18 to 16S ribosomal RNA. In Vibrio cholerae serotype O1 (strain ATCC 39541 / Classical Ogawa 395 / O395), this protein is Small ribosomal subunit protein bS6.